The sequence spans 104 residues: Large ribosomal subunit protein bL21 (104 aa).

The protein belongs to the bacterial ribosomal protein bL21 family. Part of the 50S ribosomal subunit. Contacts protein L20.

In terms of biological role, this protein binds to 23S rRNA in the presence of protein L20. The chain is Large ribosomal subunit protein bL21 from Streptococcus sanguinis (strain SK36).